Here is a 304-residue protein sequence, read N- to C-terminus: Acetylglutamate kinase (304 aa).

Residues glycine 70 to glycine 71, arginine 92, and asparagine 196 each bind substrate.

It belongs to the acetylglutamate kinase family. ArgB subfamily.

It localises to the cytoplasm. It carries out the reaction N-acetyl-L-glutamate + ATP = N-acetyl-L-glutamyl 5-phosphate + ADP. It participates in amino-acid biosynthesis; L-arginine biosynthesis; N(2)-acetyl-L-ornithine from L-glutamate: step 2/4. Catalyzes the ATP-dependent phosphorylation of N-acetyl-L-glutamate. In Methanococcoides burtonii (strain DSM 6242 / NBRC 107633 / OCM 468 / ACE-M), this protein is Acetylglutamate kinase.